The chain runs to 391 residues: Probable protein arginine N-methyltransferase 6.1 (391 aa).

The disordered stretch occupies residues 1-35 (MLPSHLNGHSPLARRCPRLSAASPPATGDSDAAAA). A compositionally biased stretch (low complexity) spans 20-35 (SAASPPATGDSDAAAA). One can recognise an SAM-dependent MTase PRMT-type domain in the interval 45–391 (DRIYFQSYSH…QTLVKDYAMR (347 aa)). 5 residues coordinate S-adenosyl-L-methionine: His-58, Arg-67, Gly-91, Glu-113, and Glu-142. Catalysis depends on residues Glu-156 and Glu-165.

This sequence belongs to the class I-like SAM-binding methyltransferase superfamily. Protein arginine N-methyltransferase family. PRMT6 subfamily.

In terms of biological role, arginine methyltransferase that can both catalyze the formation of omega-N monomethylarginine (MMA) and asymmetrical dimethylarginine (aDMA). The sequence is that of Probable protein arginine N-methyltransferase 6.1 (PRMT6.1) from Oryza sativa subsp. japonica (Rice).